The primary structure comprises 291 residues: tRNA-uridine aminocarboxypropyltransferase 1 (291 aa).

Residues 158-181 (KNSAYEPSSKRPKFSPENDKNTYE) form a disordered region. Positions 171–181 (FSPENDKNTYE) are enriched in basic and acidic residues. A DXTW motif is present at residues 199 to 202 (DSTW).

Belongs to the TDD superfamily. DTWD1 family.

Its subcellular location is the nucleus. The enzyme catalyses a uridine in tRNA + S-adenosyl-L-methionine = a 3-[(3S)-3-amino-3-carboxypropyl]uridine in tRNA + S-methyl-5'-thioadenosine + H(+). Functionally, catalyzes the formation of 3-(3-amino-3-carboxypropyl)uridine (acp3U) at position 20 in the D-loop of several cytoplasmic tRNAs (acp3U(20)). This Xenopus laevis (African clawed frog) protein is tRNA-uridine aminocarboxypropyltransferase 1.